The sequence spans 150 residues: MAENFHILLLNGPNLNLLGTREPDKYGNTTLADIVSELETQAQALNVKFSHLQSNAEHVLIDTIHQARGNTDFILINPAAFTHTSVALRDALLAVAIPFIEIHLSNVHAREPFRHHSYLSDVAVGVICGLGADGYQYALQTAVKRLSTSN.

Y26 serves as the catalytic Proton acceptor. Residues N77, H83, and D90 each contribute to the substrate site. H103 acts as the Proton donor in catalysis. Residues 104–105 and R114 each bind substrate; that span reads LS.

The protein belongs to the type-II 3-dehydroquinase family. Homododecamer.

The catalysed reaction is 3-dehydroquinate = 3-dehydroshikimate + H2O. Its pathway is metabolic intermediate biosynthesis; chorismate biosynthesis; chorismate from D-erythrose 4-phosphate and phosphoenolpyruvate: step 3/7. Catalyzes a trans-dehydration via an enolate intermediate. The sequence is that of 3-dehydroquinate dehydratase from Pectobacterium atrosepticum (strain SCRI 1043 / ATCC BAA-672) (Erwinia carotovora subsp. atroseptica).